A 152-amino-acid polypeptide reads, in one-letter code: Nucleoside diphosphate kinase (152 aa).

Residues K12, F60, R88, T94, R105, and N115 each coordinate ATP. The active-site Pros-phosphohistidine intermediate is the H118.

This sequence belongs to the NDK family. In terms of assembly, homotrimer. Mg(2+) serves as cofactor.

The enzyme catalyses a 2'-deoxyribonucleoside 5'-diphosphate + ATP = a 2'-deoxyribonucleoside 5'-triphosphate + ADP. It carries out the reaction a ribonucleoside 5'-diphosphate + ATP = a ribonucleoside 5'-triphosphate + ADP. Its function is as follows. Major role in the synthesis of nucleoside triphosphates other than ATP. The ATP gamma phosphate is transferred to the NDP beta phosphate via a ping-pong mechanism, using a phosphorylated active-site intermediate. This is Nucleoside diphosphate kinase (ndk-1) from Neurospora crassa (strain ATCC 24698 / 74-OR23-1A / CBS 708.71 / DSM 1257 / FGSC 987).